Here is a 126-residue protein sequence, read N- to C-terminus: Glycine cleavage system H protein (126 aa).

In terms of domain architecture, Lipoyl-binding spans Val-22–Ser-104. Lys-63 carries the N6-lipoyllysine modification.

The protein belongs to the GcvH family. As to quaternary structure, the glycine cleavage system is composed of four proteins: P, T, L and H. (R)-lipoate serves as cofactor.

Functionally, the glycine cleavage system catalyzes the degradation of glycine. The H protein shuttles the methylamine group of glycine from the P protein to the T protein. The chain is Glycine cleavage system H protein from Parabacteroides distasonis (strain ATCC 8503 / DSM 20701 / CIP 104284 / JCM 5825 / NCTC 11152).